Reading from the N-terminus, the 280-residue chain is MENNEEFQDELLALESIYPSCLLPISEQSFTYTLSIPDSSVRLNIQFPLDYPNSAPTVLDAYGIDKTLAEDVLLSVATGDVCIFSYMDLLKELVDIDAEQAAAERESKLQEESDKETPVMLNKSHYVAKTPEIQDEPWKPKFDWKESEPITDRKSTFMAHATRVYSTEEVREALEDLYMDKKVAKANHNMVAYRIISPNGNVIQDNDDDGESAAGSRMSHLLTMMSAENVFVCVSRWFGGVHIGPDRFKHINSSAREAVLLTDAAPSQKKGTEHGKKKKK.

Residues 9 to 109 (DELLALESIY…QAAAERESKL (101 aa)) enclose the RWD domain.

The protein belongs to the IMPACT family. In terms of assembly, interacts (via N-terminus) with gcn1 (via C-terminus); this interaction reduces the gcn1-gcn20 complex formation and prevents the interaction of gcn1 with gcn2 protein kinase and gcn2 activation in amino acid-starved cells. Interacts (via C-terminus) with act1; this interaction occurs in a gcn1-independent manner. Interacts with rpl39; this interaction occurs in a gcn1-independent manner. Associates (via middle region) with ribosomes; this association occurs in a gcn1-independent manner and persists under amino acid starvation conditions.

It is found in the cytoplasm. It localises to the nucleus. Translational regulator that ensures constant high levels of translation under amino acid starvation. Plays a role as a negative regulator of the gcn2 kinase activity; impairs gcn1-mediated gcn2 activation, and hence gcn2-mediated eIF-2-alpha phosphorylation in amino acid-starved cells and subsequent down-regulation of protein synthesis. In normal conditions, it resides in a actin complex and has no activity. In Schizosaccharomyces pombe (strain 972 / ATCC 24843) (Fission yeast), this protein is Protein IMPACT homolog (yih1).